We begin with the raw amino-acid sequence, 672 residues long: DNA ligase (672 aa).

Residues 32-36, 81-82, and Glu113 each bind NAD(+); these read DAEYD and SL. The N6-AMP-lysine intermediate role is filled by Lys115. NAD(+) contacts are provided by Arg136, Glu173, Lys290, and Lys314. Zn(2+) is bound by residues Cys408, Cys411, Cys426, and Cys432. Residues 594-672 enclose the BRCT domain; that stretch reads EIDSPFAGKT…EAEMLRLLGE (79 aa).

This sequence belongs to the NAD-dependent DNA ligase family. LigA subfamily. The cofactor is Mg(2+). Mn(2+) serves as cofactor.

It catalyses the reaction NAD(+) + (deoxyribonucleotide)n-3'-hydroxyl + 5'-phospho-(deoxyribonucleotide)m = (deoxyribonucleotide)n+m + AMP + beta-nicotinamide D-nucleotide.. DNA ligase that catalyzes the formation of phosphodiester linkages between 5'-phosphoryl and 3'-hydroxyl groups in double-stranded DNA using NAD as a coenzyme and as the energy source for the reaction. It is essential for DNA replication and repair of damaged DNA. The protein is DNA ligase of Cronobacter sakazakii (strain ATCC BAA-894) (Enterobacter sakazakii).